The following is a 464-amino-acid chain: MSSEKTNQSWGGRFSEPVDAFVARFTASVEFDKRLYRHDIMGSIAHASMLAKVGVLTDAERDAIEGGLKQIQGEIEAGQFDWRVDLEDVHMNIEARLTDRIGVTGKKLHTGRSRNDQVATDIRLWLRDEIDVILAEITRLQQGLLGLAEAEADTIMPGFTHLQTAQPVTFGHHLLAWFEMLSRDYERLVDCRKRTNRMPLGSAALAGTTYPIQREITAELLGFDAVGGNSLDGVSDRDFAIEFCAAASLAMMHLSRFSEELVLWTSAQFQFIDLPDRFCTGSSIMPQKKNPDVPELVRGKTGRVFGALTGLLTLMKGQPLAYNKDNQEDKEPLFDAADTLRDSLRAFADMVPAIKPKREIMREAALRGFSTATDLADYLVRKGLPFRDCHEIVGHAVKYGVHSGKDLAEMSLDELRQFSDQIDDDVFAVLTLEGSVGARDHIGGTAPNQVRAAVARGRELLSAR.

The protein belongs to the lyase 1 family. Argininosuccinate lyase subfamily.

The protein resides in the cytoplasm. It catalyses the reaction 2-(N(omega)-L-arginino)succinate = fumarate + L-arginine. It participates in amino-acid biosynthesis; L-arginine biosynthesis; L-arginine from L-ornithine and carbamoyl phosphate: step 3/3. This chain is Argininosuccinate lyase, found in Ectopseudomonas mendocina (strain ymp) (Pseudomonas mendocina).